Reading from the N-terminus, the 67-residue chain is UPF0337 protein msl9551 (67 aa).

Belongs to the UPF0337 (CsbD) family.

The chain is UPF0337 protein msl9551 from Mesorhizobium japonicum (strain LMG 29417 / CECT 9101 / MAFF 303099) (Mesorhizobium loti (strain MAFF 303099)).